An 829-amino-acid chain; its full sequence is Probable receptor-like protein kinase At5g59700 (829 aa).

An N-terminal signal peptide occupies residues 1-24; the sequence is MGGEKFGFLIWILSIPCLIFLCYG. The Extracellular segment spans residues 25–406; the sequence is YVPVDNYLIN…SSTTKKNVGM (382 aa). 4 N-linked (GlcNAc...) asparagine glycosylation sites follow: Asn-40, Asn-216, Asn-279, and Asn-380. Residues 407–427 form a helical membrane-spanning segment; that stretch reads IIGLTIGSLLALVVLGGFFVL. The Cytoplasmic segment spans residues 428–829; sequence YKKRGRDQDG…FSQLIKSEGR (402 aa). One can recognise a Protein kinase domain in the interval 482-755; sequence FDENRAIGVG…GDVLWNLEYA (274 aa). Residues 488–496 and Lys-510 contribute to the ATP site; that span reads IGVGGFGKV. The active-site Proton acceptor is the Asp-606.

It belongs to the protein kinase superfamily. Ser/Thr protein kinase family.

Its subcellular location is the cell membrane. The protein is Probable receptor-like protein kinase At5g59700 of Arabidopsis thaliana (Mouse-ear cress).